Consider the following 787-residue polypeptide: ISWI one complex protein 3 (787 aa).

The span at 1–22 (MDSPSNSIQNLQQEAQGSSSAQ) shows a compositional bias: polar residues. Disordered stretches follow at residues 1–137 (MDSP…AHEQ), 672–693 (ILEQKSTTDNNPSINTNPLPKD), and 749–787 (TEYDSEEYVDDEEDDEADIYDDNDNDSSFDDGRVKRQRT). Residues 40–50 (DQSVSVSQSSD) are compositionally biased toward low complexity. Positions 79-92 (KPKRKRPAPPKKKA) are enriched in basic residues. Positions 100–137 (SNDKVEKKKTTSIAKDGKPTLKTNDKKVAPKPKPAHEQ) are enriched in basic and acidic residues. A compositionally biased stretch (polar residues) spans 675 to 689 (QKSTTDNNPSINTNP). A compositionally biased stretch (acidic residues) spans 751–777 (YDSEEYVDDEEDDEADIYDDNDNDSSF). Residues 778–787 (DDGRVKRQRT) are compositionally biased toward basic and acidic residues.

Component of the ISW1A complex, which at least consists of ISW1 and IOC3.

It localises to the nucleus. Functionally, functions as a component of the ISW1A complex, which acts in remodeling the chromatin by catalyzing an ATP-dependent alteration in the structure of nucleosomal DNA. The ISW1A complex represses gene expression at initiation through specific positioning of a promoter proximal dinucleosome. This Saccharomyces cerevisiae (strain ATCC 204508 / S288c) (Baker's yeast) protein is ISWI one complex protein 3 (IOC3).